The chain runs to 572 residues: Mitochondrial distribution and morphology protein 34 (572 aa).

Residues 1 to 195 form the SMP-LTD domain; the sequence is MAFNFNWSPL…LPAIIHRLSL (195 aa). Disordered stretches follow at residues 212–236, 321–426, 477–522, and 553–572; these read TASA…VDAL, VGSM…PDND, SATP…DNPT, and CGPF…AYGH. Positions 330–348 are enriched in low complexity; sequence SASMVSSQSRSSTPSHTFS. Residues 358–370 show a composition bias toward basic residues; that stretch reads RHSKAHARKRKKR. Positions 371-381 are enriched in basic and acidic residues; that stretch reads VVDLRRPKTTD. Polar residues-rich tracts occupy residues 387-400 and 500-511; these read SDES…SAPS and DSSAGSSRQLPS.

It belongs to the MDM34 family. As to quaternary structure, component of the ER-mitochondria encounter structure (ERMES) or MDM complex, composed of mmm1, mdm10, mdm12 and mdm34.

It localises to the mitochondrion outer membrane. Functionally, component of the ERMES/MDM complex, which serves as a molecular tether to connect the endoplasmic reticulum (ER) and mitochondria. Components of this complex are involved in the control of mitochondrial shape and protein biogenesis, and function in nonvesicular lipid trafficking between the ER and mitochondria. Mdm34 is required for the interaction of the ER-resident membrane protein mmm1 and the outer mitochondrial membrane-resident beta-barrel protein mdm10. This Aspergillus fumigatus (strain CBS 144.89 / FGSC A1163 / CEA10) (Neosartorya fumigata) protein is Mitochondrial distribution and morphology protein 34.